A 276-amino-acid polypeptide reads, in one-letter code: HUWE1-associated protein modifying stress responses 2 (276 aa).

3 disordered regions span residues 146–182 (GKVP…TPVG), 204–238 (ISMR…PNSL), and 252–276 (VRKR…NRMV). Residues 149-165 (PPTPQPPRTPRMSPRPP) are compositionally biased toward pro residues. 2 stretches are compositionally biased toward low complexity: residues 166–179 (AAAS…ESGT) and 208–219 (SGPPGSSSQDGG). Positions 252–276 (VRKRTSAQFGDGSADSPLHKRNRMV) are nuclear localization signal.

This sequence belongs to the HAPSTR1 family. Homooligomer. Heterooligomer with HAPSTR1; the interaction is direct and stabilizes HAPSTR1 independently of HUWE1. Interacts with HUWE1.

The protein resides in the nucleus. In terms of biological role, together with HAPSTR1 plays a central regulatory role in the cellular response to molecular stressors, such as DNA damage, nutrient scarcity, and protein misfolding. Regulates these multiple stress response signaling pathways by stabilizing HAPSTR1, but also independently of HAPSTR1. In Mus musculus (Mouse), this protein is HUWE1-associated protein modifying stress responses 2.